Consider the following 325-residue polypeptide: Ribose-phosphate pyrophosphokinase 4 (325 aa).

Residues Asp145 and His147 each contribute to the Mg(2+) site. The segment at 228 to 243 (GRHVVIVDDLVQSGGT) is binding of phosphoribosylpyrophosphate.

The protein belongs to the ribose-phosphate pyrophosphokinase family. The cofactor is Mg(2+).

The enzyme catalyses D-ribose 5-phosphate + ATP = 5-phospho-alpha-D-ribose 1-diphosphate + AMP + H(+). The chain is Ribose-phosphate pyrophosphokinase 4 from Oryza sativa subsp. japonica (Rice).